A 154-amino-acid chain; its full sequence is Xanthine-guanine phosphoribosyltransferase (154 aa).

5-phospho-alpha-D-ribose 1-diphosphate-binding positions include 37–38 (RG), R69, and 88–96 (EDLVDSGDT). R69 is a GMP binding site. D89 provides a ligand contact to Mg(2+). D92 and I135 together coordinate guanine. Positions 92 and 135 each coordinate xanthine. Residues 92–96 (DSGDT) and 134–135 (WI) each bind GMP.

Belongs to the purine/pyrimidine phosphoribosyltransferase family. XGPT subfamily. As to quaternary structure, homotetramer. The cofactor is Mg(2+).

Its subcellular location is the cell inner membrane. The enzyme catalyses GMP + diphosphate = guanine + 5-phospho-alpha-D-ribose 1-diphosphate. The catalysed reaction is XMP + diphosphate = xanthine + 5-phospho-alpha-D-ribose 1-diphosphate. It carries out the reaction IMP + diphosphate = hypoxanthine + 5-phospho-alpha-D-ribose 1-diphosphate. It participates in purine metabolism; GMP biosynthesis via salvage pathway; GMP from guanine: step 1/1. It functions in the pathway purine metabolism; XMP biosynthesis via salvage pathway; XMP from xanthine: step 1/1. Its function is as follows. Purine salvage pathway enzyme that catalyzes the transfer of the ribosyl-5-phosphate group from 5-phospho-alpha-D-ribose 1-diphosphate (PRPP) to the N9 position of the 6-oxopurines guanine and xanthine to form the corresponding ribonucleotides GMP (guanosine 5'-monophosphate) and XMP (xanthosine 5'-monophosphate), with the release of PPi. To a lesser extent, also acts on hypoxanthine. The sequence is that of Xanthine-guanine phosphoribosyltransferase from Vibrio parahaemolyticus serotype O3:K6 (strain RIMD 2210633).